We begin with the raw amino-acid sequence, 124 residues long: Glutaredoxin-2 (124 aa).

A disulfide bond links C13 and C16.

Belongs to the glutaredoxin family. In terms of assembly, homodimer.

It localises to the host cytoplasm. Functionally, glutaredoxin necessary for virion morphogenesis and virus replication. Functions as a thiol-disulfide transfer protein between membrane-associated OPG128 and substrates OPG095 or OPG053. The complete pathway for formation of disulfide bonds in intracellular virion membrane proteins sequentially involves oxidation of OPG072, OPG128 and OPG088. Exhibit thioltransferase and dehydroascorbate reductase activities in vitro. This Bos taurus (Bovine) protein is Glutaredoxin-2 (OPG088).